Here is a 116-residue protein sequence, read N- to C-terminus: Putative anti-sigma factor antagonist BtrV (116 aa).

An STAS domain is found at Met1 to Phe110. Ser55 bears the Phosphoserine; by BtrW mark.

This sequence belongs to the anti-sigma-factor antagonist family. Interacts with BtrW. Post-translationally, phosphorylated by BtrW. Dephosphorylated by BtrU.

Possible positive regulator of sigma-B activity. Non-phosphorylated BtrV binds to BtrW, preventing its association with an unknown partner(s) that might be sigma-B. When phosphorylated, releases BtrW, which is then free to complex with and inactivate its partner. Involved in type III secretion system (T3SS). The polypeptide is Putative anti-sigma factor antagonist BtrV (btrV) (Bordetella bronchiseptica (strain ATCC BAA-588 / NCTC 13252 / RB50) (Alcaligenes bronchisepticus)).